Consider the following 594-residue polypeptide: Alanine--tRNA ligase (594 aa).

Residues H456, H460, C558, and H562 each contribute to the Zn(2+) site.

Belongs to the class-II aminoacyl-tRNA synthetase family. Zn(2+) serves as cofactor.

The protein localises to the cytoplasm. It catalyses the reaction tRNA(Ala) + L-alanine + ATP = L-alanyl-tRNA(Ala) + AMP + diphosphate. In terms of biological role, catalyzes the attachment of alanine to tRNA(Ala) in a two-step reaction: alanine is first activated by ATP to form Ala-AMP and then transferred to the acceptor end of tRNA(Ala). Also edits incorrectly charged Ser-tRNA(Ala) and Gly-tRNA(Ala) via its editing domain. This Borreliella burgdorferi (strain ATCC 35210 / DSM 4680 / CIP 102532 / B31) (Borrelia burgdorferi) protein is Alanine--tRNA ligase (alaS).